The primary structure comprises 141 residues: Nucleoside diphosphate kinase (141 aa).

ATP contacts are provided by Lys11, Phe59, Arg87, Thr93, Arg104, and Asn114. Catalysis depends on His117, which acts as the Pros-phosphohistidine intermediate.

It belongs to the NDK family. Homotetramer. Mg(2+) serves as cofactor.

The protein resides in the cytoplasm. It catalyses the reaction a 2'-deoxyribonucleoside 5'-diphosphate + ATP = a 2'-deoxyribonucleoside 5'-triphosphate + ADP. It carries out the reaction a ribonucleoside 5'-diphosphate + ATP = a ribonucleoside 5'-triphosphate + ADP. In terms of biological role, major role in the synthesis of nucleoside triphosphates other than ATP. The ATP gamma phosphate is transferred to the NDP beta phosphate via a ping-pong mechanism, using a phosphorylated active-site intermediate. The chain is Nucleoside diphosphate kinase from Bordetella bronchiseptica (strain ATCC BAA-588 / NCTC 13252 / RB50) (Alcaligenes bronchisepticus).